We begin with the raw amino-acid sequence, 271 residues long: MTIVSAFLVPGSPLPHLRPDVKSWESFKVAMQNVGEKLRASKPDVVLIYSTQWFAVLDEIWLTRQRSLDIHVDENWHEFGELPYDIYSDVDLANACIESCRAAGVNARGADYESFPIDTGTIVACNALKVGTSDLPVVVASNNLYDDQAATERLAALAVACISEKGKRIAVIGVGGLSGSVFTTAIDPAEDRVVKAVEDDCNKNILSLMESGNIQALREALKSYSKEARAEMGFKHFHWLLGALDGHFKGATVHHYGALYGSGAAVVEFSI.

Belongs to the LigB/MhpB extradiol dioxygenase family. As to quaternary structure, heterotetramer of 2 alpha and 2 beta subunits.

Component of the 2-aminophenol 1,6-dioxygenase complex that catalyzes the ring fission of 2-aminophenol to produce 2-aminomuconic 6-semialdehyde. AmnA seems to have a role in the stability of the complex. The protein is 2-aminophenol 1,6-dioxygenase alpha subunit (amnA) of Pseudomonas sp.